The following is a 247-amino-acid chain: PHD finger protein ALFIN-LIKE 3 (247 aa).

The disordered stretch occupies residues 147–178; sequence DRSGVDSSGKSKHSTKRTGEGQVKRSRVVAEE. The segment at 188–240 adopts a PHD-type zinc-finger fold; it reads ETFCGTCGGLYNANEFWIGCDICERWFHGKCVRITPAKAEHIKHYKCPDCSSS.

This sequence belongs to the Alfin family. Interacts with H3K4me3 and to a lesser extent with H3K4me2.

It is found in the nucleus. Functionally, histone-binding component that specifically recognizes H3 tails trimethylated on 'Lys-4' (H3K4me3), which mark transcription start sites of virtually all active genes. The protein is PHD finger protein ALFIN-LIKE 3 of Oryza sativa subsp. indica (Rice).